The following is a 309-amino-acid chain: F-box/LRR-repeat protein At3g48880 (309 aa).

An F-box domain is found at Leu10–Val57. LRR repeat units follow at residues Val77–Phe107, Asn108–Ala133, Ser159–Gly184, and Cys208–His233.

The sequence is that of F-box/LRR-repeat protein At3g48880 from Arabidopsis thaliana (Mouse-ear cress).